Consider the following 222-residue polypeptide: ATP-dependent Clp protease proteolytic subunit (222 aa).

S125 functions as the Nucleophile in the catalytic mechanism. Residue H150 is part of the active site.

The protein belongs to the peptidase S14 family. In terms of assembly, fourteen ClpP subunits assemble into 2 heptameric rings which stack back to back to give a disk-like structure with a central cavity, resembling the structure of eukaryotic proteasomes.

The protein localises to the cytoplasm. The enzyme catalyses Hydrolysis of proteins to small peptides in the presence of ATP and magnesium. alpha-casein is the usual test substrate. In the absence of ATP, only oligopeptides shorter than five residues are hydrolyzed (such as succinyl-Leu-Tyr-|-NHMec, and Leu-Tyr-Leu-|-Tyr-Trp, in which cleavage of the -Tyr-|-Leu- and -Tyr-|-Trp bonds also occurs).. Its function is as follows. Cleaves peptides in various proteins in a process that requires ATP hydrolysis. Has a chymotrypsin-like activity. Plays a major role in the degradation of misfolded proteins. The protein is ATP-dependent Clp protease proteolytic subunit of Porphyromonas gingivalis (strain ATCC BAA-308 / W83).